The chain runs to 1774 residues: U3 small nucleolar RNA-associated protein 10 (1774 aa).

Positions Tyr1206–Glu1226 are disordered. The span at Asn1215–Glu1226 shows a compositional bias: acidic residues. An HEAT repeat occupies Leu1734–Tyr1772.

It belongs to the HEATR1/UTP10 family. In terms of assembly, component of the ribosomal small subunit (SSU) processome.

The protein resides in the nucleus. It localises to the nucleolus. Functionally, involved in nucleolar processing of pre-18S ribosomal RNA. Involved in ribosome biosynthesis. This Kluyveromyces lactis (strain ATCC 8585 / CBS 2359 / DSM 70799 / NBRC 1267 / NRRL Y-1140 / WM37) (Yeast) protein is U3 small nucleolar RNA-associated protein 10.